The chain runs to 61 residues: NPCCDAATCKVTPGSQCAEGLCCDQCKFMKEGTVCRPARGDWNDDTCTGQSADCPRKGIYG.

Positions 1–61 (NPCCDAATCK…ADCPRKGIYG (61 aa)) constitute a Disintegrin domain. 5 disulfide bridges follow: Cys3/Cys26, Cys9/Cys23, Cys17/Cys23, Cys22/Cys47, and Cys35/Cys54. A Cell attachment site motif is present at residues 39–41 (RGD).

The protein belongs to the venom metalloproteinase (M12B) family. P-II subfamily. P-IIa sub-subfamily. Monomer (disintegrin). In terms of tissue distribution, expressed by the venom gland.

The protein resides in the secreted. In terms of biological role, inhibits fibrinogen interaction with platelets. Acts by binding to alpha-IIb/beta-3 (ITGA2B/ITGB3) on the platelet surface and inhibits aggregation induced by ADP, thrombin, platelet-activating factor and collagen. This Crotalus atrox (Western diamondback rattlesnake) protein is Disintegrin atroxatin.